The following is a 254-amino-acid chain: Phosphorelay intermediate protein rdeA (254 aa).

The HPt domain occupies 26–123; it reads EKEFTFELLD…KILSDFKKNW (98 aa). Phosphohistidine is present on His-65. A disordered region spans residues 124-254; the sequence is DKNHGEGGSD…SNSPTKIQTK (131 aa). Residues 131–143 are compositionally biased toward acidic residues; that stretch reads GSDDGGDDNESEP. The span at 146-160 shows a compositional bias: low complexity; sequence NNNNDGSSVNNNDSS. Basic and acidic residues predominate over residues 166–186; it reads KDIENKNTDENTGKNLNERSK. The span at 220-238 shows a compositional bias: low complexity; sequence NNTNSSSNNNSKNENGLNS. Residues 239-254 show a composition bias toward polar residues; it reads KQPQTSSNSPTKIQTK.

The phosphorelay mechanism involves the sequential transfer of a phosphate group from 'Asp-212' of pde2 to His-65 of rdeA. In vitro, dephosphorylated by dokA.

It is found in the cytoplasm. In terms of biological role, phosphorelay protein that supplies phosphate to regA or accepts phosphate from regA; depending on the relative concentration of the phosphodonor proteins. In vitro, acts as a substrate for cheA (bacterial kinase). Plays a role in the development. ypd1 (yeast) can complement rdeA defect. This chain is Phosphorelay intermediate protein rdeA (rdeA), found in Dictyostelium discoideum (Social amoeba).